The sequence spans 245 residues: Phycocyanobilin:ferredoxin oxidoreductase (245 aa).

It belongs to the HY2 family.

The enzyme catalyses (2R,3Z)-phycocyanobilin + 4 oxidized [2Fe-2S]-[ferredoxin] = biliverdin IXalpha + 4 reduced [2Fe-2S]-[ferredoxin] + 4 H(+). Functionally, catalyzes the four-electron reduction of biliverdin IX-alpha (2-electron reduction at both the A and D rings); the reaction proceeds via an isolatable 2-electron intermediate, 181,182-dihydrobiliverdin. The polypeptide is Phycocyanobilin:ferredoxin oxidoreductase (Microcystis aeruginosa (strain NIES-843 / IAM M-2473)).